The primary structure comprises 245 residues: Acyl-protein thioesterase 1 (245 aa).

Catalysis depends on charge relay system residues serine 126, aspartate 182, and histidine 214.

The protein belongs to the AB hydrolase superfamily. AB hydrolase 2 family.

It localises to the cytoplasm. The protein resides in the nucleus. It carries out the reaction S-hexadecanoyl-L-cysteinyl-[protein] + H2O = L-cysteinyl-[protein] + hexadecanoate + H(+). In terms of biological role, hydrolyzes fatty acids from S-acylated cysteine residues in proteins with a strong preference for palmitoylated G-alpha proteins over other acyl substrates. Mediates the deacylation of G-alpha proteins such as GPA1 in vivo, but has weak or no activity toward palmitoylated Ras proteins. Has weak lysophospholipase activity in vitro; however such activity may not exist in vivo. The polypeptide is Acyl-protein thioesterase 1 (Neurospora crassa (strain ATCC 24698 / 74-OR23-1A / CBS 708.71 / DSM 1257 / FGSC 987)).